We begin with the raw amino-acid sequence, 105 residues long: Putative membrane protein insertion efficiency factor (105 aa).

It belongs to the UPF0161 family.

The protein resides in the cell membrane. Its function is as follows. Could be involved in insertion of integral membrane proteins into the membrane. This is Putative membrane protein insertion efficiency factor from Bifidobacterium longum (strain NCC 2705).